The following is a 423-amino-acid chain: Putative transmembrane protein ORF103 (423 aa).

Residues 43–57 are compositionally biased toward basic and acidic residues; sequence EPKIEQEEPQQKPEV. A disordered region spans residues 43–91; that stretch reads EPKIEQEEPQQKPEVVDVYSNETDKNEEEVSIITSEDEEEDEKGMLFKR. Residues 67 to 84 are compositionally biased toward acidic residues; sequence KNEEEVSIITSEDEEEDE. Helical transmembrane passes span 125 to 145 and 162 to 182; these read IIGI…VAVL and FSLC…GLAI. Residues 253–282 are disordered; the sequence is DESGSEVSSEDEESDQETLLRNRKMPTNSK. 2 helical membrane-spanning segments follow: residues 326–346 and 366–386; these read LISA…IVGS and IPTL…MCVL.

It localises to the host membrane. The sequence is that of Putative transmembrane protein ORF103 from Magallana gigas (Pacific oyster).